The primary structure comprises 151 residues: Deoxyuridine 5'-triphosphate nucleotidohydrolase (151 aa).

Residues 70–72, Asn83, 87–89, and Met97 each bind substrate; these read RSG and LID.

The protein belongs to the dUTPase family. Homotrimer. Mg(2+) serves as cofactor.

The catalysed reaction is dUTP + H2O = dUMP + diphosphate + H(+). Its pathway is pyrimidine metabolism; dUMP biosynthesis; dUMP from dCTP (dUTP route): step 2/2. In terms of biological role, this enzyme is involved in nucleotide metabolism: it produces dUMP, the immediate precursor of thymidine nucleotides and it decreases the intracellular concentration of dUTP so that uracil cannot be incorporated into DNA. This chain is Deoxyuridine 5'-triphosphate nucleotidohydrolase, found in Escherichia coli O7:K1 (strain IAI39 / ExPEC).